Consider the following 482-residue polypeptide: MTQHPPLTIVGGGLAGCEAAWQAARAGLRVILIEMRPLRTTEAHLGDGLAELVCSNSLRSDDPLYNAVGLLHEEMRRAGSLILAMAEAHRVPAGGALAVDRQGFSDAITRALAEHPLIEIRRGEVDRLPAVEDGPAIIASGPLTSAALAAAIAEATGETSLAFFDAIAPIVHKDSIDFDRAWFQSRYDKGDGRDYINCPLTRDQYDAFVDALLAGEKTMFKEWEGTPYFDGCLPIEVMAERGRETLAFGPMKPVGLTDPRNPGLRPHAVVQLRQDNALGTLYNMVGFQTKLKHGEQARIFRMIPGLENAEFARLGGIHRNTFLNSPRLLDPTLRLKARPHLRFAGQITGCEGYVESAAIGLLAGRFASAEILDAASFAPPPPTTALGGLLGHITGGANAETFQPMNVNFGLLPPLEARPVRPGAKPRVPKGRERKLESARRALVDLGDWLRQPSPWSAEDSPRAALPIPEPTPLGPASGSSE.

FAD is bound at residue 11–16 (GGGLAG). Positions 450–482 (LRQPSPWSAEDSPRAALPIPEPTPLGPASGSSE) are disordered.

It belongs to the MnmG family. TrmFO subfamily. Requires FAD as cofactor.

The protein resides in the cytoplasm. It catalyses the reaction uridine(54) in tRNA + (6R)-5,10-methylene-5,6,7,8-tetrahydrofolate + NADH + H(+) = 5-methyluridine(54) in tRNA + (6S)-5,6,7,8-tetrahydrofolate + NAD(+). The catalysed reaction is uridine(54) in tRNA + (6R)-5,10-methylene-5,6,7,8-tetrahydrofolate + NADPH + H(+) = 5-methyluridine(54) in tRNA + (6S)-5,6,7,8-tetrahydrofolate + NADP(+). Its function is as follows. Catalyzes the folate-dependent formation of 5-methyl-uridine at position 54 (M-5-U54) in all tRNAs. The protein is Methylenetetrahydrofolate--tRNA-(uracil-5-)-methyltransferase TrmFO of Rhodospirillum rubrum (strain ATCC 11170 / ATH 1.1.1 / DSM 467 / LMG 4362 / NCIMB 8255 / S1).